Reading from the N-terminus, the 185-residue chain is Elongation factor P (185 aa).

This sequence belongs to the elongation factor P family.

It localises to the cytoplasm. Its pathway is protein biosynthesis; polypeptide chain elongation. Its function is as follows. Involved in peptide bond synthesis. Stimulates efficient translation and peptide-bond synthesis on native or reconstituted 70S ribosomes in vitro. Probably functions indirectly by altering the affinity of the ribosome for aminoacyl-tRNA, thus increasing their reactivity as acceptors for peptidyl transferase. This Geobacillus sp. (strain WCH70) protein is Elongation factor P.